Reading from the N-terminus, the 254-residue chain is Leucyl/phenylalanyl-tRNA--protein transferase (254 aa).

The protein belongs to the L/F-transferase family.

The protein localises to the cytoplasm. It carries out the reaction N-terminal L-lysyl-[protein] + L-leucyl-tRNA(Leu) = N-terminal L-leucyl-L-lysyl-[protein] + tRNA(Leu) + H(+). The enzyme catalyses N-terminal L-arginyl-[protein] + L-leucyl-tRNA(Leu) = N-terminal L-leucyl-L-arginyl-[protein] + tRNA(Leu) + H(+). It catalyses the reaction L-phenylalanyl-tRNA(Phe) + an N-terminal L-alpha-aminoacyl-[protein] = an N-terminal L-phenylalanyl-L-alpha-aminoacyl-[protein] + tRNA(Phe). Functionally, functions in the N-end rule pathway of protein degradation where it conjugates Leu, Phe and, less efficiently, Met from aminoacyl-tRNAs to the N-termini of proteins containing an N-terminal arginine or lysine. This Burkholderia vietnamiensis (strain G4 / LMG 22486) (Burkholderia cepacia (strain R1808)) protein is Leucyl/phenylalanyl-tRNA--protein transferase.